Consider the following 304-residue polypeptide: MSILKNLAKNLGLTNITQPKKKYATVGEKKSDEEKERAKYKVKNIDNLKEDEVTKCPSCGVLSHKSEIRANMKMCSNCNHYFNMSARERIELLIDEGTFKEEDVTLTSANPINFPEYVEKIEKAQHDSGMNEGVISGLGEINGLKVSIACMDFNFMGGSMGSVVGEKITAALERAIEHKIPAVVVAISGGARMQEGLTSLMQMAKTSAAVKKMRLAGLPFISVPVNPTTGGVTASFAMLGDIIISEPKARIGFAGPRVIEQTIRQKLPENFQKSEFLQECGMVDVIAKREDLKATIFKVLNDII.

The 253-residue stretch at 52–304 folds into the CoA carboxyltransferase N-terminal domain; that stretch reads EVTKCPSCGV…TIFKVLNDII (253 aa). Zn(2+) contacts are provided by Cys-56, Cys-59, Cys-75, and Cys-78. The C4-type zinc finger occupies 56-78; that stretch reads CPSCGVLSHKSEIRANMKMCSNC.

Belongs to the AccD/PCCB family. As to quaternary structure, acetyl-CoA carboxylase is a heterohexamer composed of biotin carboxyl carrier protein (AccB), biotin carboxylase (AccC) and two subunits each of ACCase subunit alpha (AccA) and ACCase subunit beta (AccD). Requires Zn(2+) as cofactor.

It is found in the cytoplasm. The catalysed reaction is N(6)-carboxybiotinyl-L-lysyl-[protein] + acetyl-CoA = N(6)-biotinyl-L-lysyl-[protein] + malonyl-CoA. It participates in lipid metabolism; malonyl-CoA biosynthesis; malonyl-CoA from acetyl-CoA: step 1/1. In terms of biological role, component of the acetyl coenzyme A carboxylase (ACC) complex. Biotin carboxylase (BC) catalyzes the carboxylation of biotin on its carrier protein (BCCP) and then the CO(2) group is transferred by the transcarboxylase to acetyl-CoA to form malonyl-CoA. The protein is Acetyl-coenzyme A carboxylase carboxyl transferase subunit beta of Fusobacterium nucleatum subsp. nucleatum (strain ATCC 25586 / DSM 15643 / BCRC 10681 / CIP 101130 / JCM 8532 / KCTC 2640 / LMG 13131 / VPI 4355).